We begin with the raw amino-acid sequence, 104 residues long: Small ubiquitin-related modifier 3 (104 aa).

Residues lysine 5 and lysine 7 each participate in a glycyl lysine isopeptide (Lys-Gly) (interchain with G-Cter in SUMO2) cross-link. Lysine 11 participates in a covalent cross-link: Glycyl lysine isopeptide (Lys-Gly) (interchain with G-Cter in SUMO); alternate. Lysine 11 is covalently cross-linked (Glycyl lysine isopeptide (Lys-Gly) (interchain with G-Cter in SUMO2); alternate). The 78-residue stretch at 15–92 folds into the Ubiquitin-like domain; that stretch reads DHINLKVAGQ…IDVFQQQTGG (78 aa). Glycine 92 is covalently cross-linked (Glycyl lysine isopeptide (Gly-Lys) (interchain with K-? in acceptor proteins)). The propeptide occupies 93–104; sequence SRVASCLLGSGL.

It belongs to the ubiquitin family. SUMO subfamily. Interacts with SAE2 and UBE2I. Covalently attached to a number of proteins. Interacts with USP25 (via ts SIM domain); the interaction sumoylates USP25 and inhibits its ubiquitin hydrolyzing activity. Interacts with BMAL1. Post-translationally, polymeric chains can be formed through Lys-11 cross-linking. In terms of processing, cleavage of precursor form by SENP1, SENP2 or SENP5 is necessary for function.

The protein resides in the cytoplasm. Its subcellular location is the nucleus. It is found in the PML body. Its function is as follows. Ubiquitin-like protein which can be covalently attached to target lysines either as a monomer or as a lysine-linked polymer. Does not seem to be involved in protein degradation and may function as an antagonist of ubiquitin in the degradation process. Plays a role in a number of cellular processes such as nuclear transport, DNA replication and repair, mitosis and signal transduction. Covalent attachment to its substrates requires prior activation by the E1 complex SAE1-SAE2 and linkage to the E2 enzyme UBE2I, and can be promoted by an E3 ligase such as PIAS1-4, RANBP2 or CBX4. Plays a role in the regulation of sumoylation status of SETX. This is Small ubiquitin-related modifier 3 (SUMO3) from Bos taurus (Bovine).